The chain runs to 323 residues: L-lactate dehydrogenase (323 aa).

Residues Val-12, Asp-33, and Tyr-65 each contribute to the NAD(+) site. Substrate contacts are provided by residues Arg-94 and Asn-126–Asp-129. Residue Thr-149 coordinates NAD(+). A substrate-binding site is contributed by Glu-154–Arg-157. Catalysis depends on His-181, which acts as the Proton acceptor. Thr-234 is a binding site for substrate.

The protein belongs to the LDH/MDH superfamily. LDH family. In terms of assembly, homotetramer.

The protein resides in the cytoplasm. The catalysed reaction is (S)-lactate + NAD(+) = pyruvate + NADH + H(+). It functions in the pathway fermentation; pyruvate fermentation to lactate; (S)-lactate from pyruvate: step 1/1. Its function is as follows. Catalyzes the conversion of lactate to pyruvate. The polypeptide is L-lactate dehydrogenase (Mycoplasmoides gallisepticum (strain R(low / passage 15 / clone 2)) (Mycoplasma gallisepticum)).